The sequence spans 333 residues: Diaminopimelate epimerase (333 aa).

Substrate-binding residues include Asn24 and Asn79. The active-site Proton donor is Cys88. Residues 89–90 (GN), Asn176, Asn210, and 228–229 (ER) each bind substrate. Cys237 functions as the Proton acceptor in the catalytic mechanism. 238-239 (GT) provides a ligand contact to substrate.

This sequence belongs to the diaminopimelate epimerase family. As to quaternary structure, homodimer.

The protein localises to the cytoplasm. The catalysed reaction is (2S,6S)-2,6-diaminopimelate = meso-2,6-diaminopimelate. The protein operates within amino-acid biosynthesis; L-lysine biosynthesis via DAP pathway; DL-2,6-diaminopimelate from LL-2,6-diaminopimelate: step 1/1. Catalyzes the stereoinversion of LL-2,6-diaminopimelate (L,L-DAP) to meso-diaminopimelate (meso-DAP), a precursor of L-lysine and an essential component of the bacterial peptidoglycan. This is Diaminopimelate epimerase from Clostridium acetobutylicum (strain ATCC 824 / DSM 792 / JCM 1419 / IAM 19013 / LMG 5710 / NBRC 13948 / NRRL B-527 / VKM B-1787 / 2291 / W).